The primary structure comprises 34 residues: uncharacterized protein (34 aa).

Residues 1-12 (MFSHFEVSENRP) are compositionally biased toward basic and acidic residues. The tract at residues 1-21 (MFSHFEVSENRPRKQPRRKRI) is disordered.

This is an uncharacterized protein from Saccharomyces cerevisiae (strain ATCC 204508 / S288c) (Baker's yeast).